A 325-amino-acid chain; its full sequence is Quinone oxidoreductase (325 aa).

This sequence belongs to the zinc-containing alcohol dehydrogenase family. Quinone oxidoreductase subfamily.

It catalyses the reaction 2 a quinone + NADPH + H(+) = 2 a 1,4-benzosemiquinone + NADP(+). The polypeptide is Quinone oxidoreductase (qor) (Pseudomonas aeruginosa (strain ATCC 15692 / DSM 22644 / CIP 104116 / JCM 14847 / LMG 12228 / 1C / PRS 101 / PAO1)).